The chain runs to 419 residues: L-rhamnose isomerase (419 aa).

Positions 262, 294, and 296 each coordinate Mn(2+).

This sequence belongs to the rhamnose isomerase family. As to quaternary structure, homotetramer. Mn(2+) is required as a cofactor.

The protein localises to the cytoplasm. The enzyme catalyses L-rhamnopyranose = L-rhamnulose. Its pathway is carbohydrate degradation; L-rhamnose degradation; glycerone phosphate from L-rhamnose: step 1/3. In terms of biological role, catalyzes the interconversion of L-rhamnose and L-rhamnulose. The polypeptide is L-rhamnose isomerase (Citrobacter koseri (strain ATCC BAA-895 / CDC 4225-83 / SGSC4696)).